We begin with the raw amino-acid sequence, 296 residues long: Putative peptide transport system permease protein BRA1093/BS1330_II1085 (296 aa).

Helical transmembrane passes span 35-55 (IGLVLLLIVVLAAVLAPWITN), 97-117 (LWIGLTVAVLSAILGAIIGIA), 131-151 (VMDALMAFPAILLAIGISAAL), 205-225 (ILPNCLAPLLVTLTFVFAYAI), 229-249 (ATLSFLGIGTPPPHASWGSIV), and 260-280 (WWIMLFPGIAITISALAINLI). An ABC transmembrane type-1 domain is found at 97–281 (LWIGLTVAVL…ISALAINLIG (185 aa)).

It belongs to the binding-protein-dependent transport system permease family. As to quaternary structure, the complex is composed of two ATP-binding proteins (BRA1094), two transmembrane proteins (BRA1092 and BRA1093) and a solute-binding protein (BRA1090).

Its subcellular location is the cell inner membrane. Probably part of an ABC transporter complex that could be involved in peptide import. Probably responsible for the translocation of the substrate across the membrane. The sequence is that of Putative peptide transport system permease protein BRA1093/BS1330_II1085 from Brucella suis biovar 1 (strain 1330).